The sequence spans 194 residues: Protein GrpE (194 aa).

Residues 1–12 are compositionally biased toward polar residues; that stretch reads MSSKEQNTPNEQ. Residues 1-39 form a disordered region; it reads MSSKEQNTPNEQASDEIETEQAKNQGADTAAEAADQRDE.

It belongs to the GrpE family. As to quaternary structure, homodimer.

The protein resides in the cytoplasm. In terms of biological role, participates actively in the response to hyperosmotic and heat shock by preventing the aggregation of stress-denatured proteins, in association with DnaK and GrpE. It is the nucleotide exchange factor for DnaK and may function as a thermosensor. Unfolded proteins bind initially to DnaJ; upon interaction with the DnaJ-bound protein, DnaK hydrolyzes its bound ATP, resulting in the formation of a stable complex. GrpE releases ADP from DnaK; ATP binding to DnaK triggers the release of the substrate protein, thus completing the reaction cycle. Several rounds of ATP-dependent interactions between DnaJ, DnaK and GrpE are required for fully efficient folding. In Erwinia tasmaniensis (strain DSM 17950 / CFBP 7177 / CIP 109463 / NCPPB 4357 / Et1/99), this protein is Protein GrpE.